We begin with the raw amino-acid sequence, 406 residues long: Trk system potassium uptake protein trkA homolog 1 (406 aa).

The 124-residue stretch at 1-124 (MKAVIIGAGE…RAQVGVDLMI (124 aa)) folds into the RCK N-terminal 1 domain. Residues 7–11 (GAGEV), aspartate 29, 70–71 (TG), and arginine 101 contribute to the NAD(+) site. An RCK C-terminal domain is found at 144 to 225 (IDAEMFAEGK…MEDLESVFGS (82 aa)). The RCK N-terminal 2 domain maps to 230-348 (RTRILLIGCG…FEMVGIDMAV (119 aa)). NAD(+) is bound at residue 232 to 262 (RILLIGCGIVGMYLAKLIDKEENADLRIIEH).

In terms of biological role, part of a potassium transport system. In Methanosarcina mazei (Methanosarcina frisia), this protein is Trk system potassium uptake protein trkA homolog 1 (trkA1).